Reading from the N-terminus, the 513-residue chain is ATP synthase subunit alpha (513 aa).

ATP is bound at residue 169–176 (GDRQTGKT).

This sequence belongs to the ATPase alpha/beta chains family. In terms of assembly, F-type ATPases have 2 components, CF(1) - the catalytic core - and CF(0) - the membrane proton channel. CF(1) has five subunits: alpha(3), beta(3), gamma(1), delta(1), epsilon(1). CF(0) has three main subunits: a(1), b(2) and c(9-12). The alpha and beta chains form an alternating ring which encloses part of the gamma chain. CF(1) is attached to CF(0) by a central stalk formed by the gamma and epsilon chains, while a peripheral stalk is formed by the delta and b chains.

It is found in the cell inner membrane. It catalyses the reaction ATP + H2O + 4 H(+)(in) = ADP + phosphate + 5 H(+)(out). Produces ATP from ADP in the presence of a proton gradient across the membrane. The alpha chain is a regulatory subunit. This Polynucleobacter necessarius subsp. necessarius (strain STIR1) protein is ATP synthase subunit alpha.